A 463-amino-acid polypeptide reads, in one-letter code: Nitrate/nitrite antiporter NarK (463 aa).

The Cytoplasmic portion of the chain corresponds to Met1–Asn37. The helical transmembrane segment at Leu38–Ala59 threads the bilayer. The Periplasmic segment spans residues Val60–Gln73. A helical transmembrane segment spans residues Leu74–Met95. Arg89 provides a ligand contact to nitrate. Residue Arg89 coordinates nitrite. Over Val96–Arg102 the chain is Cytoplasmic. A helical transmembrane segment spans residues Arg103–Ala122. Residues Val123–Tyr130 are Periplasmic-facing. Residues Ser131–Met151 traverse the membrane as a helical segment. At Ala152–Ala166 the chain is on the cytoplasmic side. A helical transmembrane segment spans residues Leu167–Val189. Residue Asn175 coordinates nitrate. Topologically, residues Ser190–Tyr211 are periplasmic. The helical transmembrane segment at Leu212–Gly233 threads the bilayer. Residues Met234 to Arg253 lie on the Cytoplasmic side of the membrane. Residues Gly254–Ser281 form a helical membrane-spanning segment. Tyr263 contacts nitrate. Tyr263 lines the nitrite pocket. The Periplasmic segment spans residues Lys282–Gln289. A helical transmembrane segment spans residues Ile290–Ser312. At Asp313 to Gly316 the chain is on the cytoplasmic side. The chain crosses the membrane as a helical span at residues Gly317–Thr338. The Periplasmic segment spans residues Leu339–Ser347. A helical membrane pass occupies residues Phe348–Ile373. Residues Ser374–Ala405 are Cytoplasmic-facing. Residues Ala406 to Ser427 form a helical membrane-spanning segment. Residue Ser411 participates in nitrate binding. The Periplasmic portion of the chain corresponds to Ser428–Pro435. Residues Val436–Gly458 form a helical membrane-spanning segment. Residues Arg459–Lys463 are Cytoplasmic-facing.

The protein belongs to the major facilitator superfamily. Nitrate/nitrite porter (TC 2.A.1.8) family.

The protein resides in the cell inner membrane. The catalysed reaction is nitrate(in) + nitrite(out) = nitrate(out) + nitrite(in). Catalyzes nitrate uptake, nitrite uptake and nitrite export across the cytoplasmic membrane. Functions as a nitrate/nitrite exchanger, and protons are unlikely to be co-transported. This chain is Nitrate/nitrite antiporter NarK, found in Escherichia coli (strain K12).